The chain runs to 94 residues: Co-chaperonin GroES (94 aa).

The protein belongs to the GroES chaperonin family. In terms of assembly, heptamer of 7 subunits arranged in a ring. Interacts with the chaperonin GroEL.

It is found in the cytoplasm. In terms of biological role, together with the chaperonin GroEL, plays an essential role in assisting protein folding. The GroEL-GroES system forms a nano-cage that allows encapsulation of the non-native substrate proteins and provides a physical environment optimized to promote and accelerate protein folding. GroES binds to the apical surface of the GroEL ring, thereby capping the opening of the GroEL channel. This is Co-chaperonin GroES from Alkaliphilus oremlandii (strain OhILAs) (Clostridium oremlandii (strain OhILAs)).